A 246-amino-acid polypeptide reads, in one-letter code: MPFTFKLFHVDDSRCGMPVSTDGVLLGAWAPLVQAKTILDIGAGSGLLSLMAAQRSQAKITAIELDNDAALDCQQNFDASHWSERLEIICCDIQAYCQREQARQFDHIICNPPYFANGPQSSKFSRATARHTDSLSFDALLQAIKQLLAPEGQASLILPTESVSLLEAILSTYNLRLCHKLLAASVEGKAPNRQILVLGHDLKAKKIHNFGTELQAVAQQQLYIREKTGHYSLAFTLLSQDFYLKL.

It belongs to the methyltransferase superfamily. tRNA (adenine-N(6)-)-methyltransferase family.

Its subcellular location is the cytoplasm. The catalysed reaction is adenosine(37) in tRNA1(Val) + S-adenosyl-L-methionine = N(6)-methyladenosine(37) in tRNA1(Val) + S-adenosyl-L-homocysteine + H(+). Its function is as follows. Specifically methylates the adenine in position 37 of tRNA(1)(Val) (anticodon cmo5UAC). The protein is tRNA1(Val) (adenine(37)-N6)-methyltransferase of Shewanella halifaxensis (strain HAW-EB4).